The primary structure comprises 512 residues: Histidine ammonia-lyase (512 aa).

The segment at residues 141-143 is a cross-link (5-imidazolinone (Ala-Gly)); it reads ASG. Position 142 is a 2,3-didehydroalanine (Ser) (serine 142).

It belongs to the PAL/histidase family. Contains an active site 4-methylidene-imidazol-5-one (MIO), which is formed autocatalytically by cyclization and dehydration of residues Ala-Ser-Gly.

The protein resides in the cytoplasm. The enzyme catalyses L-histidine = trans-urocanate + NH4(+). It functions in the pathway amino-acid degradation; L-histidine degradation into L-glutamate; N-formimidoyl-L-glutamate from L-histidine: step 1/3. The sequence is that of Histidine ammonia-lyase from Bacillus velezensis (strain DSM 23117 / BGSC 10A6 / LMG 26770 / FZB42) (Bacillus amyloliquefaciens subsp. plantarum).